Reading from the N-terminus, the 339-residue chain is Glycerol-3-phosphate dehydrogenase [NAD(P)+] (339 aa).

Ser15, Tyr16, His36, and Lys110 together coordinate NADPH. Sn-glycerol 3-phosphate-binding residues include Lys110, Gly139, and Thr141. Position 143 (Ala143) interacts with NADPH. Residues Lys195, Asp248, Ser258, Arg259, and Asn260 each contribute to the sn-glycerol 3-phosphate site. The active-site Proton acceptor is Lys195. Position 259 (Arg259) interacts with NADPH. Val283 and Glu285 together coordinate NADPH.

Belongs to the NAD-dependent glycerol-3-phosphate dehydrogenase family.

The protein localises to the cytoplasm. The catalysed reaction is sn-glycerol 3-phosphate + NAD(+) = dihydroxyacetone phosphate + NADH + H(+). The enzyme catalyses sn-glycerol 3-phosphate + NADP(+) = dihydroxyacetone phosphate + NADPH + H(+). It functions in the pathway membrane lipid metabolism; glycerophospholipid metabolism. Its function is as follows. Catalyzes the reduction of the glycolytic intermediate dihydroxyacetone phosphate (DHAP) to sn-glycerol 3-phosphate (G3P), the key precursor for phospholipid synthesis. The protein is Glycerol-3-phosphate dehydrogenase [NAD(P)+] of Salmonella agona (strain SL483).